Reading from the N-terminus, the 210-residue chain is Na(+)-translocating NADH-quinone reductase subunit D (210 aa).

The next 6 helical transmembrane spans lie at 11–31 (ILAP…VCSA), 42–62 (FVMT…VSLI), 70–90 (VRII…DQIL), 103–123 (VFVG…AFAM), 131–151 (FIDG…VGFF), and 178–198 (NGLM…IWAI).

Belongs to the NqrDE/RnfAE family. In terms of assembly, composed of six subunits; NqrA, NqrB, NqrC, NqrD, NqrE and NqrF.

It is found in the cell inner membrane. The catalysed reaction is a ubiquinone + n Na(+)(in) + NADH + H(+) = a ubiquinol + n Na(+)(out) + NAD(+). Functionally, NQR complex catalyzes the reduction of ubiquinone-1 to ubiquinol by two successive reactions, coupled with the transport of Na(+) ions from the cytoplasm to the periplasm. NqrA to NqrE are probably involved in the second step, the conversion of ubisemiquinone to ubiquinol. This is Na(+)-translocating NADH-quinone reductase subunit D from Vibrio anguillarum (Listonella anguillarum).